The chain runs to 149 residues: 3-dehydroquinate dehydratase (149 aa).

The active-site Proton acceptor is tyrosine 26. Residues asparagine 78, histidine 84, and aspartate 91 each contribute to the substrate site. The active-site Proton donor is histidine 104. Residues 105-106 and arginine 115 contribute to the substrate site; that span reads LS.

This sequence belongs to the type-II 3-dehydroquinase family. As to quaternary structure, homododecamer.

The enzyme catalyses 3-dehydroquinate = 3-dehydroshikimate + H2O. It functions in the pathway metabolic intermediate biosynthesis; chorismate biosynthesis; chorismate from D-erythrose 4-phosphate and phosphoenolpyruvate: step 3/7. Catalyzes a trans-dehydration via an enolate intermediate. This Polynucleobacter necessarius subsp. necessarius (strain STIR1) protein is 3-dehydroquinate dehydratase.